The following is a 115-amino-acid chain: NADH-ubiquinone oxidoreductase chain 3 (115 aa).

Helical transmembrane passes span 3 to 23, 55 to 75, and 86 to 106; these read LLII…IAFW, FFLV…LLPL, and TMMA…SYEW.

The protein belongs to the complex I subunit 3 family. In terms of assembly, core subunit of respiratory chain NADH dehydrogenase (Complex I) which is composed of 45 different subunits. Interacts with TMEM186. Interacts with TMEM242.

Its subcellular location is the mitochondrion inner membrane. It carries out the reaction a ubiquinone + NADH + 5 H(+)(in) = a ubiquinol + NAD(+) + 4 H(+)(out). Functionally, core subunit of the mitochondrial membrane respiratory chain NADH dehydrogenase (Complex I) which catalyzes electron transfer from NADH through the respiratory chain, using ubiquinone as an electron acceptor. Essential for the catalytic activity of complex I. This Rattus norvegicus (Rat) protein is NADH-ubiquinone oxidoreductase chain 3.